We begin with the raw amino-acid sequence, 1246 residues long: Myosin-1 (1246 aa).

Positions 1 to 41 are disordered; that stretch reads MGHSRRPVGGEKKSRGFGRSKAVADVGDGRQTGGKPQVKKA. One can recognise a Myosin motor domain in the interval 51–730; sequence IGVSDLTLLS…TLFALEAMRD (680 aa). 144–151 serves as a coordination point for ATP; sequence GESGAGKT. A Phosphoserine modification is found at Ser-372. The tract at residues 419-501 is actin-binding; it reads SIGILDIYGF…PGVFAALNDA (83 aa). 2 consecutive IQ domains span residues 734-754 and 755-780; these read HNMA…RIEC and AIRI…QGHK. One can recognise a TH1 domain in the interval 788 to 976; that stretch reads RRRMSLLGSR…TIHTSAGEPP (189 aa). The span at 956–970 shows a compositional bias: polar residues; sequence GSSNVDTYKSSTIHT. Disordered regions lie at residues 956–1080 and 1127–1246; these read GSSN…PKKP and WTPQ…DDEW. Composition is skewed to pro residues over residues 1033–1045 and 1065–1078; these read APQP…PVPQ and APPP…PAPK. The 62-residue stretch at 1077–1138 folds into the SH3 domain; the sequence is PKKPMAKVLY…PQAYLEEQKA (62 aa). 2 stretches are compositionally biased toward low complexity: residues 1151-1166 and 1214-1228; these read TPAT…AKAK and NSAS…LAEA. The span at 1229–1240 shows a compositional bias: basic and acidic residues; that stretch reads LRQRQEAMHGKQ.

The protein belongs to the TRAFAC class myosin-kinesin ATPase superfamily. Myosin family. Post-translationally, phosphorylation of the TEDS site (Ser-372) is required for the polarization of the actin cytoskeleton. Phosphorylation probably activates the myosin-I ATPase activity.

Its subcellular location is the cytoplasm. It is found in the cytoskeleton. It localises to the actin patch. In terms of biological role, type-I myosin implicated in the organization of the actin cytoskeleton. Required for proper actin cytoskeleton polarization. At the cell cortex, assembles in patch-like structures together with proteins from the actin-polymerizing machinery and promotes actin assembly. Functions as actin nucleation-promoting factor (NPF) for the Arp2/3 complex. Plays an important role in polarized growth, spore germination, hyphal morphogenesis, and septal wall formation. This Aspergillus terreus (strain NIH 2624 / FGSC A1156) protein is Myosin-1 (myoA).